The following is a 367-amino-acid chain: Zinc finger CCCH domain-containing protein 56 (367 aa).

The disordered stretch occupies residues 38 to 80; that stretch reads YNSQWNADGGGGGSSRAGSEQPPPGKKSRGGGGGEGGGNTSKS. A compositionally biased stretch (gly residues) spans 67–76; sequence GGGGGEGGGN. 3 consecutive C3H1-type zinc fingers follow at residues 87-114, 169-197, and 245-273; these read FFKT…HGME, AYKG…HDEQ, and NWKT…HGAA.

The sequence is that of Zinc finger CCCH domain-containing protein 56 from Oryza sativa subsp. japonica (Rice).